A 553-amino-acid polypeptide reads, in one-letter code: Membrane protein insertase YidC (553 aa).

A helical transmembrane segment spans residues 6 to 26; sequence LIALVLSLLVLVFWEMYFGLF. The segment at 34-59 is disordered; the sequence is NKTEQAAPTTTQPATPQTVPPQAATP. The segment covering 38–59 has biased composition (low complexity); sequence QAAPTTTQPATPQTVPPQAATP. The next 5 helical transmembrane spans lie at 331–351, 360–380, 424–444, 477–497, and 512–532; these read LASA…VYVL, NWGV…WPLT, VNPM…FALY, IPYL…MFIQ, and IMMI…SGLV.

It belongs to the OXA1/ALB3/YidC family. Type 1 subfamily. Interacts with the Sec translocase complex via SecD. Specifically interacts with transmembrane segments of nascent integral membrane proteins during membrane integration.

It localises to the cell inner membrane. Required for the insertion and/or proper folding and/or complex formation of integral membrane proteins into the membrane. Involved in integration of membrane proteins that insert both dependently and independently of the Sec translocase complex, as well as at least some lipoproteins. Aids folding of multispanning membrane proteins. The protein is Membrane protein insertase YidC of Syntrophobacter fumaroxidans (strain DSM 10017 / MPOB).